Reading from the N-terminus, the 122-residue chain is Large ribosomal subunit protein uL14c (122 aa).

This sequence belongs to the universal ribosomal protein uL14 family. In terms of assembly, part of the 50S ribosomal subunit.

It localises to the plastid. Its subcellular location is the chloroplast. Binds to 23S rRNA. This Chaetosphaeridium globosum (Charophycean green alga) protein is Large ribosomal subunit protein uL14c.